The primary structure comprises 510 residues: Inositol-3-phosphate synthase (510 aa).

NAD(+)-binding residues include glycine 70, glycine 71, asparagine 72, asparagine 73, aspartate 143, isoleucine 180, glutamine 190, arginine 193, threonine 230, alanine 231, asparagine 232, threonine 233, glycine 281, serine 282, aspartate 306, serine 309, asparagine 340, asparagine 341, aspartate 342, lysine 355, glycine 393, aspartate 394, aspartate 422, and serine 423.

The protein belongs to the myo-inositol 1-phosphate synthase family. It depends on NAD(+) as a cofactor.

The protein localises to the cytoplasm. It is found in the cytosol. Its subcellular location is the nucleus. It catalyses the reaction D-glucose 6-phosphate = 1D-myo-inositol 3-phosphate. Its pathway is polyol metabolism; myo-inositol biosynthesis; myo-inositol from D-glucose 6-phosphate: step 1/2. Key enzyme in myo-inositol biosynthesis pathway that catalyzes the conversion of glucose 6-phosphate to 1-myo-inositol 1-phosphate in a NAD-dependent manner. The protein is Inositol-3-phosphate synthase (TUR1) of Spirodela polyrhiza (Giant duckweed).